Reading from the N-terminus, the 52-residue chain is Gastrin/cholecystokinin-like peptide (52 aa).

It belongs to the gastrin/cholecystokinin family.

Its subcellular location is the secreted. In terms of biological role, may control digestion processes. In Trachemys scripta (Red-eared slider turtle), this protein is Gastrin/cholecystokinin-like peptide.